The sequence spans 440 residues: Putative postmeiotic segregation increased 2-like protein 1 (440 aa).

Basic and acidic residues predominate over residues 164–178 (RVEHNVESSRWEPRR). Residues 164–215 (RVEHNVESSRWEPRRRGACGSRGGNFPSPRGGSGVASLERAESSSTEPAKAI) are disordered. In terms of domain architecture, Histidine kinase spans 230 to 364 (PVVPSLSTAV…MTVSVKQLFS (135 aa)).

This sequence belongs to the DNA mismatch repair MutL/HexB family. As to expression, highly expressed in kidney, spleen, adrenal gland, ovary and cerebellum and to a lower extent in liver, esophagus, stomach, duodenum, colon, bladder, uterus, lung, pancreas and cerebrum. Not expressed in heart.

The chain is Putative postmeiotic segregation increased 2-like protein 1 (PMS2P1) from Homo sapiens (Human).